The sequence spans 547 residues: Chaperonin GroEL 1 (547 aa).

Residues 30 to 33, lysine 51, 87 to 91, glycine 415, and aspartate 496 contribute to the ATP site; these read TLGP and DGTTT.

The protein belongs to the chaperonin (HSP60) family. Forms a cylinder of 14 subunits composed of two heptameric rings stacked back-to-back. Interacts with the co-chaperonin GroES.

Its subcellular location is the cytoplasm. It catalyses the reaction ATP + H2O + a folded polypeptide = ADP + phosphate + an unfolded polypeptide.. In terms of biological role, together with its co-chaperonin GroES, plays an essential role in assisting protein folding. The GroEL-GroES system forms a nano-cage that allows encapsulation of the non-native substrate proteins and provides a physical environment optimized to promote and accelerate protein folding. This chain is Chaperonin GroEL 1, found in Rhodopseudomonas palustris (strain BisB18).